Reading from the N-terminus, the 500-residue chain is Lysine--tRNA ligase (500 aa).

Glu410 and Glu417 together coordinate Mg(2+).

It belongs to the class-II aminoacyl-tRNA synthetase family. Homodimer. Mg(2+) is required as a cofactor.

It is found in the cytoplasm. It carries out the reaction tRNA(Lys) + L-lysine + ATP = L-lysyl-tRNA(Lys) + AMP + diphosphate. This is Lysine--tRNA ligase from Mycoplasma mycoides subsp. mycoides SC (strain CCUG 32753 / NCTC 10114 / PG1).